An 86-amino-acid polypeptide reads, in one-letter code: MKTLLLSLVMVGFMYLVSGQNRTCRSCTGALCLKIEQCKEGQNLCFERKITDDFFGMKTVRGCADTCANPGENEKVTYCSTDNCNS.

The signal sequence occupies residues 1-19; the sequence is MKTLLLSLVMVGFMYLVSG. 3 disulfide bridges follow: C24–C45, C38–C63, and C79–C84.

The protein belongs to the three-finger toxin family. Ancestral subfamily. In terms of tissue distribution, expressed by the venom gland.

It is found in the secreted. The polypeptide is Toxin 3FTx-Dis4 (Dispholidus typus (Boomslang)).